The primary structure comprises 112 residues: UPF0145 protein CD630_17110 (112 aa).

Belongs to the UPF0145 family.

This chain is UPF0145 protein CD630_17110, found in Clostridioides difficile (strain 630) (Peptoclostridium difficile).